The following is a 736-amino-acid chain: 1,4-alpha-glucan branching enzyme GlgB (736 aa).

The active-site Nucleophile is Asp417. Catalysis depends on Glu470, which acts as the Proton donor.

It belongs to the glycosyl hydrolase 13 family. GlgB subfamily. Monomer.

The enzyme catalyses Transfers a segment of a (1-&gt;4)-alpha-D-glucan chain to a primary hydroxy group in a similar glucan chain.. It participates in glycan biosynthesis; glycogen biosynthesis. Catalyzes the formation of the alpha-1,6-glucosidic linkages in glycogen by scission of a 1,4-alpha-linked oligosaccharide from growing alpha-1,4-glucan chains and the subsequent attachment of the oligosaccharide to the alpha-1,6 position. This Pseudomonas putida (strain ATCC 47054 / DSM 6125 / CFBP 8728 / NCIMB 11950 / KT2440) protein is 1,4-alpha-glucan branching enzyme GlgB.